We begin with the raw amino-acid sequence, 196 residues long: MPIGVPKVPFRSPGEEDASWVDIYNRLYRERLLFLGQEVNSEISNQLIGLMVYLSIEDDKKDLYLFINSPGGWVIPGIAIYDTMQFVQPDVQTVCMGLAASMGSFVLAGGKITKRLAFPHARVMIHQPASSFYEAQTGEFILEAEELLKLRETITRVYVQRTGKPLWLVSEDMERDVFMSAAEAQAYGIVDLVAVE.

The active-site Nucleophile is the Ser-101. His-126 is an active-site residue.

The protein belongs to the peptidase S14 family. In terms of assembly, component of the chloroplastic Clp protease core complex.

Its subcellular location is the plastid. The protein resides in the chloroplast stroma. The enzyme catalyses Hydrolysis of proteins to small peptides in the presence of ATP and magnesium. alpha-casein is the usual test substrate. In the absence of ATP, only oligopeptides shorter than five residues are hydrolyzed (such as succinyl-Leu-Tyr-|-NHMec, and Leu-Tyr-Leu-|-Tyr-Trp, in which cleavage of the -Tyr-|-Leu- and -Tyr-|-Trp bonds also occurs).. Functionally, cleaves peptides in various proteins in a process that requires ATP hydrolysis. Has a chymotrypsin-like activity. Plays a major role in the degradation of misfolded proteins. The protein is ATP-dependent Clp protease proteolytic subunit of Lotus japonicus (Lotus corniculatus var. japonicus).